The chain runs to 231 residues: 5'-methylthioadenosine/S-adenosylhomocysteine nucleosidase (231 aa).

Catalysis depends on Glu12, which acts as the Proton acceptor. Substrate-binding positions include Gly78, Val153, and 174-175 (ME). Catalysis depends on Asp198, which acts as the Proton donor.

This sequence belongs to the PNP/UDP phosphorylase family. MtnN subfamily.

It catalyses the reaction S-adenosyl-L-homocysteine + H2O = S-(5-deoxy-D-ribos-5-yl)-L-homocysteine + adenine. The catalysed reaction is S-methyl-5'-thioadenosine + H2O = 5-(methylsulfanyl)-D-ribose + adenine. The enzyme catalyses 5'-deoxyadenosine + H2O = 5-deoxy-D-ribose + adenine. It participates in amino-acid biosynthesis; L-methionine biosynthesis via salvage pathway; S-methyl-5-thio-alpha-D-ribose 1-phosphate from S-methyl-5'-thioadenosine (hydrolase route): step 1/2. In terms of biological role, catalyzes the irreversible cleavage of the glycosidic bond in both 5'-methylthioadenosine (MTA) and S-adenosylhomocysteine (SAH/AdoHcy) to adenine and the corresponding thioribose, 5'-methylthioribose and S-ribosylhomocysteine, respectively. Also cleaves 5'-deoxyadenosine, a toxic by-product of radical S-adenosylmethionine (SAM) enzymes, into 5-deoxyribose and adenine. The protein is 5'-methylthioadenosine/S-adenosylhomocysteine nucleosidase of Vibrio atlanticus (strain LGP32) (Vibrio splendidus (strain Mel32)).